The primary structure comprises 93 residues: Acyl carrier protein AcpXL (93 aa).

The Carrier domain occupies 2-88 (STTFDKVAKI…NLCAKIDALV (87 aa)). S37 carries the post-translational modification O-(pantetheine 4'-phosphoryl)serine.

4'-phosphopantetheine is transferred from CoA to a specific serine of apo-ACP by AcpS. This modification is essential for activity because fatty acids are bound in thioester linkage to the sulfhydryl of the prosthetic group.

The protein resides in the cytoplasm. Its pathway is glycolipid biosynthesis; KDO(2)-lipid A biosynthesis. Its function is as follows. Carrier of the growing fatty acid chain in fatty acid biosynthesis. Is involved in the transfer of long hydroxylated fatty acids to lipid A. This chain is Acyl carrier protein AcpXL (acpXL), found in Mesorhizobium japonicum (strain LMG 29417 / CECT 9101 / MAFF 303099) (Mesorhizobium loti (strain MAFF 303099)).